Consider the following 311-residue polypeptide: Ribosomal RNA small subunit methyltransferase H (311 aa).

S-adenosyl-L-methionine contacts are provided by residues 41-43, aspartate 61, phenylalanine 85, aspartate 102, and glutamine 109; that span reads GGH.

Belongs to the methyltransferase superfamily. RsmH family.

It localises to the cytoplasm. It catalyses the reaction cytidine(1402) in 16S rRNA + S-adenosyl-L-methionine = N(4)-methylcytidine(1402) in 16S rRNA + S-adenosyl-L-homocysteine + H(+). Its function is as follows. Specifically methylates the N4 position of cytidine in position 1402 (C1402) of 16S rRNA. The polypeptide is Ribosomal RNA small subunit methyltransferase H (Paracidovorax citrulli (strain AAC00-1) (Acidovorax citrulli)).